Reading from the N-terminus, the 321-residue chain is Tetraacyldisaccharide 4'-kinase (321 aa).

Residue 54 to 61 (SVGGTGKT) participates in ATP binding.

It belongs to the LpxK family.

It carries out the reaction a lipid A disaccharide + ATP = a lipid IVA + ADP + H(+). It participates in glycolipid biosynthesis; lipid IV(A) biosynthesis; lipid IV(A) from (3R)-3-hydroxytetradecanoyl-[acyl-carrier-protein] and UDP-N-acetyl-alpha-D-glucosamine: step 6/6. Its function is as follows. Transfers the gamma-phosphate of ATP to the 4'-position of a tetraacyldisaccharide 1-phosphate intermediate (termed DS-1-P) to form tetraacyldisaccharide 1,4'-bis-phosphate (lipid IVA). This Rickettsia africae (strain ESF-5) protein is Tetraacyldisaccharide 4'-kinase.